Consider the following 401-residue polypeptide: Enoyl-[acyl-carrier-protein] reductase [NADH] (401 aa).

NAD(+)-binding positions include 48–53 (GASSGY), 74–75 (FE), 111–112 (DA), and 140–141 (LA). Residue Y226 coordinates substrate. The active-site Proton donor is Y236. NAD(+) is bound by residues K245 and 274–276 (VVT).

The protein belongs to the TER reductase family. In terms of assembly, monomer.

The enzyme catalyses a 2,3-saturated acyl-[ACP] + NAD(+) = a (2E)-enoyl-[ACP] + NADH + H(+). It participates in lipid metabolism; fatty acid biosynthesis. Its function is as follows. Involved in the final reduction of the elongation cycle of fatty acid synthesis (FAS II). Catalyzes the reduction of a carbon-carbon double bond in an enoyl moiety that is covalently linked to an acyl carrier protein (ACP). The polypeptide is Enoyl-[acyl-carrier-protein] reductase [NADH] (Xylella fastidiosa (strain Temecula1 / ATCC 700964)).